We begin with the raw amino-acid sequence, 282 residues long: MIVSGLSGSGKSVALKTFEDLDYYCSDNLPVELLPDFVRSRLRGNPLGDQRLAVGIDVRSRSDLTQLAQWRQAAQEYGIEARLLFFEASDEALLKRYADTRRRHPLSQLGLALPEAITRERELTAPLRAQADAIIDTSALNVHQLRRRVVTEFALGNSDRLSLLFESFAYKRGVPAEADFVFDARVLPNPHWDPELRPLTGRDAGVRDYLDKEPDVIRYSAQIVDLLDTWLPRLRNDTRSYVTIAFGCTGGKHRSVYLAERMARHAREQGWPEVATFHREQD.

Glycine 5–serine 12 lines the ATP pocket. Aspartate 57–serine 60 provides a ligand contact to GTP.

Belongs to the RapZ-like family.

Its function is as follows. Displays ATPase and GTPase activities. The polypeptide is Nucleotide-binding protein XCC2806 (Xanthomonas campestris pv. campestris (strain ATCC 33913 / DSM 3586 / NCPPB 528 / LMG 568 / P 25)).